The following is a 380-amino-acid chain: Cytochrome b (380 aa).

The next 4 helical transmembrane spans lie at 34–54, 78–99, 114–134, and 179–199; these read FGSL…LLAM, WLIR…YLHI, WNTG…GYVL, and FFAL…IHLT. 2 residues coordinate heme b: H84 and H98. Positions 183 and 197 each coordinate heme b. H202 serves as a coordination point for a ubiquinone. The next 4 membrane-spanning stretches (helical) occupy residues 227-247, 289-309, 321-341, and 348-368; these read LKDI…ALFS, LGGV…PFLH, LSQL…WVGS, and FIII…ILFP.

It belongs to the cytochrome b family. As to quaternary structure, the cytochrome bc1 complex contains 11 subunits: 3 respiratory subunits (MT-CYB, CYC1 and UQCRFS1), 2 core proteins (UQCRC1 and UQCRC2) and 6 low-molecular weight proteins (UQCRH/QCR6, UQCRB/QCR7, UQCRQ/QCR8, UQCR10/QCR9, UQCR11/QCR10 and a cleavage product of UQCRFS1). This cytochrome bc1 complex then forms a dimer. Requires heme b as cofactor.

Its subcellular location is the mitochondrion inner membrane. Component of the ubiquinol-cytochrome c reductase complex (complex III or cytochrome b-c1 complex) that is part of the mitochondrial respiratory chain. The b-c1 complex mediates electron transfer from ubiquinol to cytochrome c. Contributes to the generation of a proton gradient across the mitochondrial membrane that is then used for ATP synthesis. The polypeptide is Cytochrome b (MT-CYB) (Thalassoica antarctica (Antarctic petrel)).